The sequence spans 468 residues: Glutamate--tRNA ligase (468 aa).

The 'HIGH' region signature appears at 8-18 (PSPTGFLHVGG). Zn(2+)-binding residues include Cys-97, Cys-99, Cys-124, and Asp-126. The short motif at 236–240 (KLSKR) is the 'KMSKS' region element. Lys-239 contributes to the ATP binding site.

Belongs to the class-I aminoacyl-tRNA synthetase family. Glutamate--tRNA ligase type 1 subfamily. Monomer. Zn(2+) is required as a cofactor.

It is found in the cytoplasm. It catalyses the reaction tRNA(Glu) + L-glutamate + ATP = L-glutamyl-tRNA(Glu) + AMP + diphosphate. In terms of biological role, catalyzes the attachment of glutamate to tRNA(Glu) in a two-step reaction: glutamate is first activated by ATP to form Glu-AMP and then transferred to the acceptor end of tRNA(Glu). This chain is Glutamate--tRNA ligase, found in Francisella tularensis subsp. tularensis (strain SCHU S4 / Schu 4).